A 344-amino-acid chain; its full sequence is Probable pectinesterase 67 (344 aa).

The first 23 residues, 1 to 23 (MGHRTRMILVLTLVVMSIWGSDA), serve as a signal peptide directing secretion. N-linked (GlcNAc...) asparagine glycans are attached at residues N43 and N151. Position 152 (Q152) interacts with substrate. The Nucleophile role is filled by D196. R256 provides a ligand contact to substrate. N-linked (GlcNAc...) asparagine glycosylation is present at N282.

It belongs to the pectinesterase family. As to expression, expressed in flower buds.

The protein localises to the secreted. It localises to the cell wall. The enzyme catalyses [(1-&gt;4)-alpha-D-galacturonosyl methyl ester](n) + n H2O = [(1-&gt;4)-alpha-D-galacturonosyl](n) + n methanol + n H(+). It functions in the pathway glycan metabolism; pectin degradation; 2-dehydro-3-deoxy-D-gluconate from pectin: step 1/5. Functionally, acts in the modification of cell walls via demethylesterification of cell wall pectin. The protein is Probable pectinesterase 67 (PME67) of Arabidopsis thaliana (Mouse-ear cress).